The chain runs to 189 residues: Large ribosomal subunit protein uL6 (189 aa).

It belongs to the universal ribosomal protein uL6 family. As to quaternary structure, part of the 50S ribosomal subunit.

Functionally, this protein binds to the 23S rRNA, and is important in its secondary structure. It is located near the subunit interface in the base of the L7/L12 stalk, and near the tRNA binding site of the peptidyltransferase center. The protein is Large ribosomal subunit protein uL6 of Microcystis aeruginosa (strain NIES-843 / IAM M-2473).